The chain runs to 699 residues: Conditioned medium factor (699 aa).

Residues 1-18 form the signal peptide; that stretch reads MRLLLLLILIITINFSYG. 4 N-linked (GlcNAc...) asparagine glycosylation sites follow: asparagine 130, asparagine 283, asparagine 346, and asparagine 430. The disordered stretch occupies residues 680-699; sequence SPQQTTNTEYNKEMSSNSVW.

In terms of processing, N- and O-glycosylated. Post-translationally, the N-terminus is blocked.

Functionally, involved in cell density sensing and might synchronize the onset of development by triggering aggregation when a majority of the cells in a given area have starved. The polypeptide is Conditioned medium factor (cmfA) (Dictyostelium discoideum (Social amoeba)).